Reading from the N-terminus, the 1398-residue chain is Disease resistance protein RPV1 (1398 aa).

The TIR domain maps to 22–185 (TTYDVFLSFR…EITNSIFRQL (164 aa)). NAD(+) contacts are provided by residues 31 to 36 (RGEDTR) and glycine 63. Glutamate 97 is an active-site residue. Positions 201 to 440 (SHVKEMILRL…KRSYDGLDRI (240 aa)) constitute an NB-ARC domain. LRR repeat units lie at residues 203 to 225 (VKEM…IYGV), 423 to 447 (KADI…IFLD), 478 to 504 (LNDL…GWEI), 535 to 560 (IKSV…VFAK), 610 to 632 (SYEL…NFDG), 633 to 657 (GKLV…DLER), 678 to 702 (MPNL…VGNM), 703 to 726 (KKLT…IGDL), 728 to 750 (SLES…GGNM), 751 to 773 (KSLT…IGDL), 775 to 797 (SLES…GGNM), 798 to 820 (KSLT…IGDL), 822 to 844 (SLEI…GGNM), 845 to 867 (KSLK…IGDL), 869 to 891 (SLKY…GGNM), 892 to 914 (KRLL…IGDL), 916 to 938 (SLKY…GGNM), 939 to 961 (KSLT…IGDL), 963 to 985 (SLEI…GGNM), 986 to 1008 (KSLK…IGDL), 1010 to 1032 (SLKY…GGNM), 1033 to 1055 (KSLL…IGDL), 1079 to 1102 (MKSL…IGDL), and 1105 to 1128 (LEML…AIDA). The segment covering 1315-1328 (QNSGDNGSALQDAN) has biased composition (polar residues). The tract at residues 1315–1336 (QNSGDNGSALQDANGNVHGANQ) is disordered. An LRR 25 repeat occupies 1346 to 1369 (LDLLRNLSLGDNGSVVLEDTLGNR). Residues 1369–1373 (RKRRR) carry the Nuclear localization signal motif.

It belongs to the disease resistance TIR-NB-LRR family. As to quaternary structure, homodimer; homodimerization is required for NAD(+) hydrolase (NADase) activity.

The protein localises to the nucleus. Its subcellular location is the cytoplasm. It catalyses the reaction NAD(+) + H2O = ADP-D-ribose + nicotinamide + H(+). Functionally, disease resistance (R) protein that confers resistance to multiple powdery and downy mildew by promoting cell death. Acts as a NAD(+) hydrolase (NADase): in response to activation, catalyzes cleavage of NAD(+) into ADP-D-ribose (ADPR) and nicotinamide; NAD(+) cleavage triggering a defense system that promotes cell death. This Vitis rotundifolia (Muscadine grape) protein is Disease resistance protein RPV1.